The primary structure comprises 442 residues: Divalent metal cation transporter MntH (442 aa).

A run of 11 helical transmembrane segments spans residues 29-49 (MLAY…PGNW), 62-82 (TLLT…SLCV), 106-126 (FCLW…ELLG), 135-155 (FVIP…VLLF), 166-186 (ALVI…ILFS), 209-229 (MLYI…LYLH), 258-278 (FALS…AATF), 295-315 (LLSP…ALLA), 347-367 (LITR…FGEN), 372-392 (LIVL…IPLV), and 413-433 (LAWL…LQSL).

Belongs to the NRAMP family.

The protein resides in the cell inner membrane. H(+)-stimulated, divalent metal cation uptake system. The polypeptide is Divalent metal cation transporter MntH (Nostoc sp. (strain PCC 7120 / SAG 25.82 / UTEX 2576)).